Reading from the N-terminus, the 479-residue chain is Trigger factor (479 aa).

The PPIase FKBP-type domain maps to 174-261; the sequence is GDIAVVSFSG…LKELKTRELP (88 aa). A disordered region spans residues 438 to 479; sequence VLESEAKTSKPAAKSKGSKTKSTKTKTNKANTEKPASDKSKS. Residues 453–464 are compositionally biased toward basic residues; that stretch reads KGSKTKSTKTKT. The segment covering 468–479 has biased composition (basic and acidic residues); sequence NTEKPASDKSKS.

This sequence belongs to the FKBP-type PPIase family. Tig subfamily.

The protein resides in the cytoplasm. It catalyses the reaction [protein]-peptidylproline (omega=180) = [protein]-peptidylproline (omega=0). In terms of biological role, involved in protein export. Acts as a chaperone by maintaining the newly synthesized protein in an open conformation. Functions as a peptidyl-prolyl cis-trans isomerase. This chain is Trigger factor, found in Prochlorococcus marinus (strain MIT 9313).